Consider the following 217-residue polypeptide: uncharacterized protein (217 aa).

A disordered region spans residues 1-32 (MTLKKHRGKMSEKSNVNKKFTNSTQNNSNWSN). A compositionally biased stretch (low complexity) spans 22 to 32 (NSTQNNSNWSN).

This is an uncharacterized protein from Acidianus filamentous virus 2 (isolate Italy/Pozzuoli) (AFV-2).